A 56-amino-acid polypeptide reads, in one-letter code: UPF0391 membrane protein Bd1438 (56 aa).

2 helical membrane passes run 4 to 24 (AAIA…SGVA) and 33 to 53 (ILLF…LVSG).

This sequence belongs to the UPF0391 family.

The protein resides in the cell membrane. In Bdellovibrio bacteriovorus (strain ATCC 15356 / DSM 50701 / NCIMB 9529 / HD100), this protein is UPF0391 membrane protein Bd1438.